Consider the following 261-residue polypeptide: MRIALGIEYDGAKYCGWQRQVDVDSVQERLEKALSHIANKPIAVFCAGRTDTGVHGTGQVVHFDVDVDRQMVAWTIGVNAHLPRDISVRWATQVSDDFHARFSATARRYRYIIYNSALRPAIFGVGVSHYHGHLDEKKMHEAAQYLVGEHDFTSVRASQCQSRSPWRAMKHVNVSRQGDFVIIDIKANAFVHHMVRNIAGSLIRVGRGQETPEWMKWVLEQKDRRVAGETAKAAGLYLVAVDYPEEFGLPSSPLGPIFLPD.

D51 functions as the Nucleophile in the catalytic mechanism. Residue Y109 coordinates substrate.

Belongs to the tRNA pseudouridine synthase TruA family. Homodimer.

It carries out the reaction uridine(38/39/40) in tRNA = pseudouridine(38/39/40) in tRNA. Functionally, formation of pseudouridine at positions 38, 39 and 40 in the anticodon stem and loop of transfer RNAs. This is tRNA pseudouridine synthase A from Photobacterium profundum (strain SS9).